The sequence spans 926 residues: Transcriptional activator protein acu-15 (926 aa).

A DNA-binding region (zn(2)-C6 fungal-type) is located at residues Cys-24 to Cys-51. Disordered regions lie at residues Lys-100 to Lys-129, Leu-602 to Leu-649, and Thr-667 to Gly-801. Residues Glu-119–Lys-129 show a composition bias toward basic and acidic residues. 2 stretches are compositionally biased toward low complexity: residues Ala-623–Ala-632 and Gln-669–Gln-681. Composition is skewed to polar residues over residues Ala-689–Gln-703 and Arg-726–Asn-736. Low complexity predominate over residues Leu-740–Gln-792.

It localises to the nucleus. Functionally, positive regulator of acetate induction. The sequence is that of Transcriptional activator protein acu-15 (acu-15) from Neurospora crassa (strain ATCC 24698 / 74-OR23-1A / CBS 708.71 / DSM 1257 / FGSC 987).